The following is a 511-amino-acid chain: GMP synthase [glutamine-hydrolyzing] (511 aa).

One can recognise a Glutamine amidotransferase type-1 domain in the interval 5 to 195 (DIIVLDFGSQ…AKYICDCEST (191 aa)). The Nucleophile role is filled by Cys82. Catalysis depends on residues His169 and Glu171. One can recognise a GMPS ATP-PPase domain in the interval 196–386 (WNMGNFAKIK…LGLSPDLVYR (191 aa)). Residue 223 to 229 (SGGVDSS) coordinates ATP.

In terms of assembly, homodimer.

It catalyses the reaction XMP + L-glutamine + ATP + H2O = GMP + L-glutamate + AMP + diphosphate + 2 H(+). It functions in the pathway purine metabolism; GMP biosynthesis; GMP from XMP (L-Gln route): step 1/1. Catalyzes the synthesis of GMP from XMP. The protein is GMP synthase [glutamine-hydrolyzing] of Campylobacter hominis (strain ATCC BAA-381 / DSM 21671 / CCUG 45161 / LMG 19568 / NCTC 13146 / CH001A).